We begin with the raw amino-acid sequence, 279 residues long: Monoacylglycerol lipase (279 aa).

The active-site Nucleophile is the S110. Active-site charge relay system residues include D226 and H256.

Belongs to the AB hydrolase superfamily. As to quaternary structure, monomer.

It localises to the secreted. The protein localises to the cell wall. It carries out the reaction a 1-acylglycerol + H2O = glycerol + a fatty acid + H(+). The catalysed reaction is Hydrolyzes glycerol monoesters of long-chain fatty acids.. The enzyme catalyses 1-butyrylglycerol + H2O = butanoate + glycerol + H(+). It catalyses the reaction 1-octanoylglycerol + H2O = octanoate + glycerol + H(+). It carries out the reaction 1-decanoylglycerol + H2O = decanoate + glycerol + H(+). The catalysed reaction is 1-dodecanoylglycerol + H2O = dodecanoate + glycerol + H(+). The enzyme catalyses 1-tetradecanoylglycerol + H2O = tetradecanoate + glycerol + H(+). It catalyses the reaction 1-(9Z-octadecenoyl)-glycerol + H2O = glycerol + (9Z)-octadecenoate + H(+). It carries out the reaction 2-(9Z-octadecenoyl)-glycerol + H2O = glycerol + (9Z)-octadecenoate + H(+). Inhibited by the serine esterase inhibitors PMSF (100%), E600 (80%) and THL (22%). Virtual screening identified a tautomer of ZINC13451138, known inhibitor for HIV-1 integrase, as a potential inhibitor. Involved in the hydrolysis of exogenous host lipids during chronic infection. Catalyzes the hydrolysis of both monoacylglycerols (MAG) and diacylglycerols (DAG), with a preference for MAG. It hydrolyzes 2-MAG, 1-3-MAG and MAG with short, medium and long chain fatty acids such as 1-monobutyroyl-rac-glycerol (MC4), 1-mono-octanoyl-rac-glycerol (MC8), 1-monodecanoyl-rac-glycerol (MC10), 1-monolauroyl-rac-glycerol (MC12), 1-monomyristoyl-rac-glycerol (MC14) and 1-mono-oleyl-rac-glycerol (MC18:1). Also able to hydrolyze DAG with short (DiC6) and medium (DiC10) fatty acid chains, but not with longest fatty acid chains. Can also hydrolyze vinyl laurate (VC12), vinyl butyrate (VC4) and vinyl propionate (VC3). In terms of biological role, induces an inflammatory response and cell apoptosis in the host cells. Increases expression of IL-6, NF-kappaB, TLR-2, TLR-6, TNF-alpha, and MyD88 in mouse alveolar macrophage RAW264.7 cells. Persistent expression induces RAW264.7 cell apoptosis in vitro. The protein is Monoacylglycerol lipase of Mycobacterium tuberculosis (strain ATCC 25618 / H37Rv).